A 332-amino-acid polypeptide reads, in one-letter code: Tumor necrosis factor receptor superfamily member 6 (332 aa).

Positions 1 to 16 (MSGIWVLLSLVFTCIA) are cleaved as a signal peptide. At 17-175 (GPLSKGDDAQ…VFQSAGSRSN (159 aa)) the chain is on the extracellular side. Asn38 carries N-linked (GlcNAc...) asparagine glycosylation. 3 TNFR-Cys repeats span residues 45 to 81 (ECPE…PQCV), 82 to 125 (PCSE…NTKC), and 126 to 164 (RCKP…TKCR). 9 cysteine pairs are disulfide-bonded: Cys46-Cys57, Cys58-Cys71, Cys61-Cys80, Cys83-Cys99, Cys102-Cys117, Cys105-Cys125, Cys127-Cys141, Cys144-Cys155, and Cys147-Cys163. The N-linked (GlcNAc...) asparagine glycan is linked to Asn116. The helical transmembrane segment at 176–192 (LHWLWALLILIPVPALV) threads the bilayer. Topologically, residues 193-332 (YREVKRRCRR…NSQNENESLT (140 aa)) are cytoplasmic. A lipid anchor (S-palmitoyl cysteine) is attached at Cys200. The segment at 210-314 (PITSNAEEVP…DKINDIVQKD (105 aa)) is interaction with HIPK3. Thr212 is subject to Phosphothreonine. Positions 227 to 251 (GKYITRIAEQMKITEVKDFVRKNGI) are interaction with CALM. Residues 227-311 (GKYITRIAEQ…ALADKINDIV (85 aa)) form the Death domain.

As to quaternary structure, component of the death-induced signaling complex (DISC) composed of cell surface receptor FAS/CD95, adapter protein FADD and the CASP8 protease; recruitment of CASP8 to the complex is required for processing of CASP8 into the p18 and p10 subunits. Interacts directly (via DED domain) with NOL3 (via CARD domain); inhibits death-inducing signaling complex (DISC) assembly by inhibiting the increase in FAS-FADD binding induced by FAS activation. Binds DAXX. Interacts with HIPK3. Part of a complex containing HIPK3 and FADD. Binds RIPK1 and FAIM2. Interacts with BABAM2 and FEM1B. Interacts with CALM. In the absence of stimulation, interacts with BIRC2, DDX3X and GSK3B. The interaction with BIRC2 and DDX3X is further enhanced upon receptor stimulation and accompanied by DDX3X and BIRC2 cleavage. Post-translationally, palmitoylated. Palmitoylation by ZDHHC7 prevents the lysosomal degradation of FAS regulating its expression at the plasma membrane.

The protein localises to the cell membrane. Its subcellular location is the membrane raft. Receptor for TNFSF6/FASLG. The adapter molecule FADD recruits caspase CASP8 to the activated receptor. The resulting death-inducing signaling complex (DISC) performs CASP8 proteolytic activation which initiates the subsequent cascade of caspases (aspartate-specific cysteine proteases) mediating apoptosis. FAS-mediated apoptosis may have a role in the induction of peripheral tolerance, in the antigen-stimulated suicide of mature T-cells, or both. This chain is Tumor necrosis factor receptor superfamily member 6 (FAS), found in Sus scrofa (Pig).